Here is a 270-residue protein sequence, read N- to C-terminus: Methylthioribulose-1-phosphate dehydratase (270 aa).

Residue C122 participates in substrate binding. Zn(2+) contacts are provided by H140 and H142. E165 acts as the Proton donor/acceptor in catalysis. Residue H230 participates in Zn(2+) binding.

It belongs to the aldolase class II family. MtnB subfamily. Zn(2+) serves as cofactor.

Its subcellular location is the cytoplasm. The catalysed reaction is 5-(methylsulfanyl)-D-ribulose 1-phosphate = 5-methylsulfanyl-2,3-dioxopentyl phosphate + H2O. Its pathway is amino-acid biosynthesis; L-methionine biosynthesis via salvage pathway; L-methionine from S-methyl-5-thio-alpha-D-ribose 1-phosphate: step 2/6. Its function is as follows. Catalyzes the dehydration of methylthioribulose-1-phosphate (MTRu-1-P) into 2,3-diketo-5-methylthiopentyl-1-phosphate (DK-MTP-1-P). The polypeptide is Methylthioribulose-1-phosphate dehydratase (Candida albicans (strain WO-1) (Yeast)).